We begin with the raw amino-acid sequence, 261 residues long: Phosphate import ATP-binding protein PstB 1 (261 aa).

An ABC transporter domain is found at 8–256; the sequence is IKVNNLSFYY…PHDSRTREYV (249 aa). An ATP-binding site is contributed by 40–47; it reads GPSGCGKS.

This sequence belongs to the ABC transporter superfamily. Phosphate importer (TC 3.A.1.7) family. In terms of assembly, the complex is composed of two ATP-binding proteins (PstB), two transmembrane proteins (PstC and PstA) and a solute-binding protein (PstS).

The protein resides in the cell inner membrane. It catalyses the reaction phosphate(out) + ATP + H2O = ADP + 2 phosphate(in) + H(+). Part of the ABC transporter complex PstSACB involved in phosphate import. Responsible for energy coupling to the transport system. The polypeptide is Phosphate import ATP-binding protein PstB 1 (Nostoc sp. (strain PCC 7120 / SAG 25.82 / UTEX 2576)).